Consider the following 407-residue polypeptide: Methylthioribose kinase (407 aa).

Residues Asn40, Lys57, and Glu111–Leu113 each bind ATP. Residue Asp229 coordinates substrate. Asp246–Glu248 contacts ATP. Arg344 provides a ligand contact to substrate.

This sequence belongs to the methylthioribose kinase family. Homodimer.

It carries out the reaction 5-(methylsulfanyl)-D-ribose + ATP = 5-(methylsulfanyl)-alpha-D-ribose 1-phosphate + ADP + H(+). The protein operates within amino-acid biosynthesis; L-methionine biosynthesis via salvage pathway; S-methyl-5-thio-alpha-D-ribose 1-phosphate from S-methyl-5'-thioadenosine (hydrolase route): step 2/2. Catalyzes the phosphorylation of methylthioribose into methylthioribose-1-phosphate. This is Methylthioribose kinase from Yersinia pseudotuberculosis serotype O:1b (strain IP 31758).